The primary structure comprises 246 residues: Putative carboxymethylenebutenolidase (246 aa).

Catalysis depends on residues Cys-127, Asp-183, and His-215.

It belongs to the dienelactone hydrolase family.

It carries out the reaction 2-(5-oxo-2,5-dihydrofuran-2-ylidene)acetate + H2O = 4-oxohex-2-enedioate + H(+). This chain is Putative carboxymethylenebutenolidase, found in Synechocystis sp. (strain ATCC 27184 / PCC 6803 / Kazusa).